The sequence spans 327 residues: Mycothiol acetyltransferase (327 aa).

N-acetyltransferase domains follow at residues 11–159 and 162–327; these read EPHG…VTLP and VQIR…EGTS. Glu42 contacts 1D-myo-inositol 2-(L-cysteinylamino)-2-deoxy-alpha-D-glucopyranoside. 89-91 contacts acetyl-CoA; the sequence is LVI. 3 residues coordinate 1D-myo-inositol 2-(L-cysteinylamino)-2-deoxy-alpha-D-glucopyranoside: Glu189, Lys228, and Glu251. Residues 255-257 and 262-268 each bind acetyl-CoA; these read LGV and QGLGLGR. Tyr289 lines the 1D-myo-inositol 2-(L-cysteinylamino)-2-deoxy-alpha-D-glucopyranoside pocket. 294-299 contributes to the acetyl-CoA binding site; it reads NAPAIR.

The protein belongs to the acetyltransferase family. MshD subfamily. Monomer.

The catalysed reaction is 1D-myo-inositol 2-(L-cysteinylamino)-2-deoxy-alpha-D-glucopyranoside + acetyl-CoA = mycothiol + CoA + H(+). Catalyzes the transfer of acetyl from acetyl-CoA to desacetylmycothiol (Cys-GlcN-Ins) to form mycothiol. This is Mycothiol acetyltransferase from Acidothermus cellulolyticus (strain ATCC 43068 / DSM 8971 / 11B).